We begin with the raw amino-acid sequence, 319 residues long: Acetyl-coenzyme A carboxylase carboxyl transferase subunit alpha (319 aa).

Residues 43 to 296 form the CoA carboxyltransferase C-terminal domain; sequence LRDKSIELTR…KKQLLFDLSE (254 aa).

The protein belongs to the AccA family. In terms of assembly, acetyl-CoA carboxylase is a heterohexamer composed of biotin carboxyl carrier protein (AccB), biotin carboxylase (AccC) and two subunits each of ACCase subunit alpha (AccA) and ACCase subunit beta (AccD).

It is found in the cytoplasm. It carries out the reaction N(6)-carboxybiotinyl-L-lysyl-[protein] + acetyl-CoA = N(6)-biotinyl-L-lysyl-[protein] + malonyl-CoA. It functions in the pathway lipid metabolism; malonyl-CoA biosynthesis; malonyl-CoA from acetyl-CoA: step 1/1. Component of the acetyl coenzyme A carboxylase (ACC) complex. First, biotin carboxylase catalyzes the carboxylation of biotin on its carrier protein (BCCP) and then the CO(2) group is transferred by the carboxyltransferase to acetyl-CoA to form malonyl-CoA. This Baumannia cicadellinicola subsp. Homalodisca coagulata protein is Acetyl-coenzyme A carboxylase carboxyl transferase subunit alpha.